The following is a 307-amino-acid chain: Thymidylate synthase (307 aa).

DUMP-binding positions include arginine 26 and 160-161 (RR). Residue cysteine 180 is the Nucleophile of the active site. DUMP-binding positions include 209–212 (RSCD), asparagine 220, and 250–252 (HIY). Residue aspartate 212 coordinates (6R)-5,10-methylene-5,6,7,8-tetrahydrofolate. Alanine 306 is a (6R)-5,10-methylene-5,6,7,8-tetrahydrofolate binding site.

The protein belongs to the thymidylate synthase family. Bacterial-type ThyA subfamily. Homodimer.

The protein resides in the cytoplasm. The enzyme catalyses dUMP + (6R)-5,10-methylene-5,6,7,8-tetrahydrofolate = 7,8-dihydrofolate + dTMP. The protein operates within pyrimidine metabolism; dTTP biosynthesis. Its function is as follows. Catalyzes the reductive methylation of 2'-deoxyuridine-5'-monophosphate (dUMP) to 2'-deoxythymidine-5'-monophosphate (dTMP) while utilizing 5,10-methylenetetrahydrofolate (mTHF) as the methyl donor and reductant in the reaction, yielding dihydrofolate (DHF) as a by-product. This enzymatic reaction provides an intracellular de novo source of dTMP, an essential precursor for DNA biosynthesis. This Rhizobium rhizogenes (strain K84 / ATCC BAA-868) (Agrobacterium radiobacter) protein is Thymidylate synthase.